The chain runs to 557 residues: Urocanate hydratase (557 aa).

NAD(+)-binding positions include 53 to 54, Gln-131, 177 to 179, Glu-197, Arg-202, 243 to 244, 264 to 268, 274 to 275, and Tyr-323; these read GG, GMG, NA, QTSAH, and YL. Cys-411 is a catalytic residue. The interval 445–464 is disordered; that stretch reads LDSGSVSSPNRETESMRDGS. Residues 455–464 are compositionally biased toward basic and acidic residues; sequence RETESMRDGS. Gly-493 contacts NAD(+).

Belongs to the urocanase family. NAD(+) is required as a cofactor.

The protein resides in the cytoplasm. It catalyses the reaction 4-imidazolone-5-propanoate = trans-urocanate + H2O. It functions in the pathway amino-acid degradation; L-histidine degradation into L-glutamate; N-formimidoyl-L-glutamate from L-histidine: step 2/3. In terms of biological role, catalyzes the conversion of urocanate to 4-imidazolone-5-propionate. This Pseudomonas putida (strain W619) protein is Urocanate hydratase.